Here is a 113-residue protein sequence, read N- to C-terminus: Hydrogenase maturation factor HypA (113 aa).

His2 serves as a coordination point for Ni(2+). The Zn(2+) site is built by Cys73, Cys76, Cys89, and Cys92.

The protein belongs to the HypA/HybF family.

In terms of biological role, involved in the maturation of [NiFe] hydrogenases. Required for nickel insertion into the metal center of the hydrogenase. This chain is Hydrogenase maturation factor HypA, found in Dechloromonas aromatica (strain RCB).